The following is a 1892-amino-acid chain: Protein TIC 214 (1892 aa).

The next 6 helical transmembrane spans lie at 18-38 (IINS…FSIG), 64-84 (FITG…HLAL), 87-107 (PHTI…WNNH), 124-144 (LSIQ…HFIL), 172-192 (VGWL…LVWI), and 221-241 (IFSI…PSPI). Disordered stretches follow at residues 250-300 (SKTE…EGWD), 794-814 (REEQ…ENKR), and 1581-1609 (RIQE…LGPV). Acidic residues predominate over residues 256–268 (VESEEEKDVEIET). The span at 1581–1602 (RIQEEKEPASQGEKERGSDIEN) shows a compositional bias: basic and acidic residues.

Belongs to the TIC214 family. In terms of assembly, part of the Tic complex.

It localises to the plastid. Its subcellular location is the chloroplast inner membrane. Involved in protein precursor import into chloroplasts. May be part of an intermediate translocation complex acting as a protein-conducting channel at the inner envelope. This Nicotiana tomentosiformis (Tobacco) protein is Protein TIC 214.